The following is a 528-amino-acid chain: Aspartic proteinase-like protein 1 (528 aa).

Residues 1–22 (MVSRSAFLLFCVLFLATEETLA) form the signal peptide. In terms of domain architecture, Peptidase A1 spans 100-449 (HYTWIDIGTP…DRENMKLGWS (350 aa)). Residue D118 is part of the active site. 2 N-linked (GlcNAc...) asparagine glycosylation sites follow: N193 and N217. D333 is an active-site residue. Residues N358 and N391 are each glycosylated (N-linked (GlcNAc...) asparagine). Positions 451–503 (SKCQEDKIEPPQASPGSTSSPNPLPTDEQQSRGGHAVSPAIAGKTPSKTPSSS) are disordered. The span at 464–482 (SPGSTSSPNPLPTDEQQSR) shows a compositional bias: polar residues. The segment covering 494–503 (KTPSKTPSSS) has biased composition (low complexity). S503 carries the GPI-anchor amidated serine lipid modification. The propeptide at 504 to 528 (SSYSFSSIMRLFNSLLLLHWLASLM) is removed in mature form.

It belongs to the peptidase A1 family.

Its subcellular location is the cell membrane. This is Aspartic proteinase-like protein 1 from Arabidopsis thaliana (Mouse-ear cress).